Here is a 335-residue protein sequence, read N- to C-terminus: MDLWNWDEASLQEVPPGDKLTGLGAEFGFYFPEVALQEDTPITPMNVEGCWKGFPELDWNPALPHEDVPFQAEPVAHPLPWSRDWTDLGCNTSDPWSCASQTPGPAPPGTSPSPFVGFEGATGQNPATSAGGVPSWSHPPAAWSTTSWDCSVGPSGATYWDNGLGGEAHEDYKMSWGGSAGSDYTTTWNTGLQDCSIPFEGHQSPAFTTPSKSNKQSDRATLTRYSKTNHRGPIQLWQFLLELLHDGARSSCIRWTGNSREFQLCDPKEVARLWGERKRKPGMNYEKLSRGLRYYYRRDIVLKSGGRKYTYRFGGRVPVLAYQDDMGHLPGAEGQ.

Disordered stretches follow at residues 94–138 and 201–220; these read DPWS…SWSH and GHQS…SDRA. Residues 205–220 show a composition bias toward polar residues; the sequence is PAFTTPSKSNKQSDRA. Residues 234-314 constitute a DNA-binding region (ETS); it reads IQLWQFLLEL…GGRKYTYRFG (81 aa).

Belongs to the ETS family. In terms of tissue distribution, testis.

It localises to the nucleus. In terms of biological role, binds to DNA sequences containing the consensus pentanucleotide 5'-CGGA[AT]-3'. This chain is ETS translocation variant 2 (Etv2), found in Mus musculus (Mouse).